Here is a 280-residue protein sequence, read N- to C-terminus: Eukaryotic translation initiation factor 3 subunit F-1 (280 aa).

Residues 8–138 (VRVHPVVLFQ…LRSYVCIQLG (131 aa)) form the MPN domain.

Belongs to the eIF-3 subunit F family. Component of the eukaryotic translation initiation factor 3 (eIF-3) complex. The eIF-3 complex interacts with pix.

It is found in the cytoplasm. In terms of biological role, component of the eukaryotic translation initiation factor 3 (eIF-3) complex, which is involved in protein synthesis of a specialized repertoire of mRNAs and, together with other initiation factors, stimulates binding of mRNA and methionyl-tRNAi to the 40S ribosome. The eIF-3 complex specifically targets and initiates translation of a subset of mRNAs involved in cell proliferation. The sequence is that of Eukaryotic translation initiation factor 3 subunit F-1 from Drosophila persimilis (Fruit fly).